The following is a 549-amino-acid chain: OBERON-like protein (549 aa).

Residues 1–56 (MLPPRQQPRPGGLQTSLSLVSPDACGSPNPQERGSTSDQARDSPSESASSRETWPT) form a disordered region. 2 stretches are compositionally biased toward polar residues: residues 28-38 (PNPQERGSTSD) and 45-56 (SESASSRETWPT). The PHD-type zinc finger occupies 224 to 288 (LCMCVICYKF…LFRCHACSRT (65 aa)). The stretch at 394 to 520 (VQEAIRKMEA…YLFEKIKLQE (127 aa)) forms a coiled coil. The segment at 519-549 (QESSRASQSSAGGNDPSQMMYSKIQDLIKNM) is disordered. Polar residues predominate over residues 521–538 (SSRASQSSAGGNDPSQMM).

As to quaternary structure, self-interacts and probably forms heteromers. Binds to VPg of pea seed borne mosaic virus (PSbMV), turnip mosaic virus (TuMV) and lettuce mosaic virus (LMV), but not with VPg of tobacco etch virus (TEV), cowpea mosaic virus (CPMV), tomato black ring virus (TBRV) and grapevine fan leaf virus (GFLV).

Its subcellular location is the nucleus. Required for the maintenance and/or establishment of both the shoot and root meristems, probably by controlling the expression of the meristem genes and of genes required for auxin responses. Involved in the development of the basal pole and in auxin-mediated root and vascular development in the embryo. Confers sensitivity to turnip mosaic virus (TuMV) probably by promoting viral movement and multiplication via interaction with TuMV VPg. This chain is OBERON-like protein (PVIP), found in Nicotiana benthamiana.